The chain runs to 273 residues: UPF0380 protein YfjQ (273 aa).

It belongs to the UPF0380 family.

The chain is UPF0380 protein YfjQ (yfjQ) from Escherichia coli (strain K12).